The sequence spans 517 residues: 2-isopropylmalate synthase (517 aa).

The 262-residue stretch at 6-267 (IIVFDTTLRD…YTTINTPEIY (262 aa)) folds into the Pyruvate carboxyltransferase domain. Mn(2+) contacts are provided by Asp15, His201, His203, and Asn237. Residues 393–517 (DLIGLQISDC…RLSKSSEHQV (125 aa)) form a regulatory domain region.

The protein belongs to the alpha-IPM synthase/homocitrate synthase family. LeuA type 1 subfamily. In terms of assembly, homodimer. Requires Mn(2+) as cofactor.

The protein resides in the cytoplasm. The catalysed reaction is 3-methyl-2-oxobutanoate + acetyl-CoA + H2O = (2S)-2-isopropylmalate + CoA + H(+). It participates in amino-acid biosynthesis; L-leucine biosynthesis; L-leucine from 3-methyl-2-oxobutanoate: step 1/4. In terms of biological role, catalyzes the condensation of the acetyl group of acetyl-CoA with 3-methyl-2-oxobutanoate (2-ketoisovalerate) to form 3-carboxy-3-hydroxy-4-methylpentanoate (2-isopropylmalate). This Aliarcobacter butzleri (strain RM4018) (Arcobacter butzleri) protein is 2-isopropylmalate synthase.